A 260-amino-acid polypeptide reads, in one-letter code: MICOS complex subunit mic25-a (260 aa).

The disordered stretch occupies residues 1-92 (MGGSESTGRK…KPTARGVGHQ (92 aa)). G2 carries the N-myristoyl glycine lipid modification. The span at 28-39 (RLSDEVVNRMKD) shows a compositional bias: basic and acidic residues. Low complexity predominate over residues 48–64 (STSTASGTTSGPTTFPS). Residues 94-187 (AEEDLYRRYE…LNSIEKKNLE (94 aa)) are a coiled coil. One can recognise a CHCH domain in the interval 213-255 (DPVCMDLQSNILKCYAENKQERLNCSDLAKEYGKCVSAAQKNL). Short sequence motifs (cx9C motif) lie at residues 216-226 (CMDLQSNILKC) and 237-247 (CSDLAKEYGKC). Intrachain disulfides connect C216/C247 and C226/C237.

This sequence belongs to the MICOS complex subunit Mic19 family. Metazoan Mic25 subfamily. In terms of assembly, component of the mitochondrial contact site and cristae organizing system (MICOS) complex (also known as MINOS or MitOS complex).

The protein localises to the mitochondrion inner membrane. Component of the MICOS complex, a large protein complex of the mitochondrial inner membrane that plays crucial roles in the maintenance of crista junctions, inner membrane architecture, and formation of contact sites to the outer membrane. The protein is MICOS complex subunit mic25-a (chchd6-a) of Xenopus laevis (African clawed frog).